Here is a 210-residue protein sequence, read N- to C-terminus: Ribosomal RNA large subunit methyltransferase E (210 aa).

5 residues coordinate S-adenosyl-L-methionine: G67, W69, D87, D103, and D128. K168 (proton acceptor) is an active-site residue.

It belongs to the class I-like SAM-binding methyltransferase superfamily. RNA methyltransferase RlmE family.

The protein localises to the cytoplasm. The enzyme catalyses uridine(2552) in 23S rRNA + S-adenosyl-L-methionine = 2'-O-methyluridine(2552) in 23S rRNA + S-adenosyl-L-homocysteine + H(+). Specifically methylates the uridine in position 2552 of 23S rRNA at the 2'-O position of the ribose in the fully assembled 50S ribosomal subunit. The protein is Ribosomal RNA large subunit methyltransferase E of Psychrobacter arcticus (strain DSM 17307 / VKM B-2377 / 273-4).